Consider the following 620-residue polypeptide: Ran-binding protein 10 (620 aa).

Positions 1-34 are disordered; it reads MAAATADPGAGSPQVGDSSGGATGCGLPSPGEQE. Alanine 2 is modified (N-acetylalanine). The B30.2/SPRY domain maps to 35–222; it reads LSRRLQRLYP…VDANFGQQPF (188 aa). Residues 253–285 enclose the LisH domain; it reads WQAVLQNMVSSYLVHHGYCATATAFARMTETPI. In terms of domain architecture, CTLH spans 291–348; sequence SIKNRQKIQKLVLEGRVGEAIETTQRFYPGLLEHNPNLLFMLKCRQFVEMVNGTDSEV. Residues 347–398 are compositionally biased toward polar residues; it reads EVRSLSSRSPKSQDSYPGSPSLSPRHGPTSSHTHNTGADSPSCSNGVASTKS. A disordered region spans residues 347–459; that stretch reads EVRSLSSRSP…TSDSEMEMEA (113 aa). Serine 361 is subject to Phosphoserine. The residue at position 362 (tyrosine 362) is a Phosphotyrosine. Serine 365, serine 367, serine 369, and serine 422 each carry phosphoserine. The span at 409 to 436 shows a compositional bias: low complexity; the sequence is SSSSSSSSSSSSSSPSSVNYSESNSTDS. Residues 437 to 450 show a composition bias toward polar residues; that stretch reads TKSQPHSSTSNQET. Phosphoserine occurs at positions 451 and 453.

This sequence belongs to the RANBP9/10 family. In terms of assembly, may form homodimers. Identified in the CTLH complex that contains GID4, RANBP9 and/or RANBP10, MKLN1, MAEA, RMND5A (or alternatively its paralog RMND5B), GID8, ARMC8, WDR26 and YPEL5. Within this complex, MAEA, RMND5A (or alternatively its paralog RMND5B), GID8, WDR26, and RANBP9 and/or RANBP10 form the catalytic core, while GID4, MKLN1, ARMC8 and YPEL5 have ancillary roles. Interacts with RAN and RANBP9. Interacts with the HGF receptor MET. Interacts with AR. Interacts with TUBB1. Interacts with YPEL5. May interact with TUBB5. Interacts with DDX4.

Its subcellular location is the cytoplasm. The protein resides in the cytosol. The protein localises to the nucleus. Its function is as follows. May act as an adapter protein to couple membrane receptors to intracellular signaling pathways. Core component of the CTLH E3 ubiquitin-protein ligase complex that selectively accepts ubiquitin from UBE2H and mediates ubiquitination and subsequent proteasomal degradation of the transcription factor HBP1. Enhances dihydrotestosterone-induced transactivation activity of AR, as well as dexamethasone-induced transactivation activity of NR3C1, but does not affect estrogen-induced transactivation. Acts as a guanine nucleotide exchange factor (GEF) for RAN GTPase. May play an essential role in hemostasis and in maintaining microtubule dynamics with respect to both platelet shape and function. The sequence is that of Ran-binding protein 10 (RANBP10) from Bos taurus (Bovine).